A 227-amino-acid polypeptide reads, in one-letter code: Hydroxylase/desaturase asaB (227 aa).

It belongs to the asaB hydroxylase/desaturase family.

It participates in secondary metabolite biosynthesis. Its function is as follows. Hydroxylase/desaturase; part of the gene cluster that mediates the biosynthesis of aspergillic acid, a hydroxamic acid-containing pyrazinone with aliphatic side chains that originates from leucine (Leu) and isoleucine (Ile). Aspergillic acid has antibiotic properties and was shown to be lethal to mice. The first step in the pathway is the production of deoxyaspergillic acid via a condensation between the Ile amine and the Leu carboxylic acid, followed by a reductive release from the protein forming the dipeptide aldehyde NH(2)-Leu-Ile-CHO, which could undergo an intermolecular cyclization resulting in a dihydropyrazinone. As the NRPS asaC lacks a condensation domain, it is improbable that it is responsible for condensation of Leu and Ile. One possibility is that asaC acts on a previously condensed dipeptide and functions as a Leu-Ile reductase to yield deoxyaspergillic acid. After asaC forms deoxyaspergillic acid, the cytochrome P450 asaD oxidizes the pyrazinone to the hydroxamic acid-containing bioactive metabolite aspergillic acid. The hydroxylase/desaturase asaB can then convert aspergillic acid to hydroxyaspergillic acid. Both aspergillic acid and hydroxyaspergillic acid can form complexes with iron producing ferriaspergillin analogs. This Aspergillus flavus (strain ATCC 200026 / FGSC A1120 / IAM 13836 / NRRL 3357 / JCM 12722 / SRRC 167) protein is Hydroxylase/desaturase asaB.